Here is a 130-residue protein sequence, read N- to C-terminus: Phosphoribosyl-AMP cyclohydrolase (130 aa).

D77 serves as a coordination point for Mg(2+). C78 is a Zn(2+) binding site. Mg(2+) contacts are provided by D79 and D81. C95 and C102 together coordinate Zn(2+).

This sequence belongs to the PRA-CH family. In terms of assembly, homodimer. Mg(2+) serves as cofactor. Zn(2+) is required as a cofactor.

It localises to the cytoplasm. The enzyme catalyses 1-(5-phospho-beta-D-ribosyl)-5'-AMP + H2O = 1-(5-phospho-beta-D-ribosyl)-5-[(5-phospho-beta-D-ribosylamino)methylideneamino]imidazole-4-carboxamide. The protein operates within amino-acid biosynthesis; L-histidine biosynthesis; L-histidine from 5-phospho-alpha-D-ribose 1-diphosphate: step 3/9. In terms of biological role, catalyzes the hydrolysis of the adenine ring of phosphoribosyl-AMP. In Pseudomonas savastanoi pv. phaseolicola (strain 1448A / Race 6) (Pseudomonas syringae pv. phaseolicola (strain 1448A / Race 6)), this protein is Phosphoribosyl-AMP cyclohydrolase.